Consider the following 447-residue polypeptide: D-ribitol-5-phosphate cytidylyltransferase (447 aa).

Belongs to the IspD/TarI cytidylyltransferase family. IspD subfamily. As to quaternary structure, homodimer.

The protein localises to the cytoplasm. It localises to the cytosol. The enzyme catalyses D-ribitol 5-phosphate + CTP + H(+) = CDP-L-ribitol + diphosphate. The catalysed reaction is D-ribose 5-phosphate + CTP + H(+) = CDP-D-ribose + diphosphate. It carries out the reaction D-ribulose 5-phosphate + CTP + H(+) = CDP-D-ribulose + diphosphate. The protein operates within protein modification; protein glycosylation. In terms of biological role, cytidylyltransferase required for protein O-linked mannosylation. Catalyzes the formation of CDP-ribitol nucleotide sugar from D-ribitol 5-phosphate. CDP-ribitol is a substrate of FKTN during the biosynthesis of the phosphorylated O-mannosyl trisaccharide (N-acetylgalactosamine-beta-3-N-acetylglucosamine-beta-4-(phosphate-6-)mannose), a carbohydrate structure present in alpha-dystroglycan (DAG1), which is required for binding laminin G-like domain-containing extracellular proteins with high affinity. Shows activity toward other pentose phosphate sugars and mediates formation of CDP-ribulose or CDP-ribose using CTP and ribulose-5-phosphate or ribose-5-phosphate, respectively. Not involved in dolichol production. The chain is D-ribitol-5-phosphate cytidylyltransferase (Crppa) from Mus musculus (Mouse).